The chain runs to 163 residues: Large ribosomal subunit protein uL15 (163 aa).

Positions 1-43 (MKLNEIADNEGSRKKRTRVGRGIGSGKGKQSGRGGKGQTARSG) are disordered. The span at 21–37 (RGIGSGKGKQSGRGGKG) shows a compositional bias: gly residues.

It belongs to the universal ribosomal protein uL15 family. In terms of assembly, part of the 50S ribosomal subunit.

Binds to the 23S rRNA. The protein is Large ribosomal subunit protein uL15 of Afipia carboxidovorans (strain ATCC 49405 / DSM 1227 / KCTC 32145 / OM5) (Oligotropha carboxidovorans).